Reading from the N-terminus, the 183-residue chain is Large ribosomal subunit protein uL5 (183 aa).

This sequence belongs to the universal ribosomal protein uL5 family. As to quaternary structure, part of the 50S ribosomal subunit; part of the 5S rRNA/L5/L18/L25 subcomplex. Contacts the 5S rRNA and the P site tRNA. Forms a bridge to the 30S subunit in the 70S ribosome.

Functionally, this is one of the proteins that bind and probably mediate the attachment of the 5S RNA into the large ribosomal subunit, where it forms part of the central protuberance. In the 70S ribosome it contacts protein S13 of the 30S subunit (bridge B1b), connecting the 2 subunits; this bridge is implicated in subunit movement. Contacts the P site tRNA; the 5S rRNA and some of its associated proteins might help stabilize positioning of ribosome-bound tRNAs. The sequence is that of Large ribosomal subunit protein uL5 from Chlorobaculum tepidum (strain ATCC 49652 / DSM 12025 / NBRC 103806 / TLS) (Chlorobium tepidum).